Here is a 238-residue protein sequence, read N- to C-terminus: Phosphoribosylaminoimidazole-succinocarboxamide synthase (238 aa).

Belongs to the SAICAR synthetase family.

It carries out the reaction 5-amino-1-(5-phospho-D-ribosyl)imidazole-4-carboxylate + L-aspartate + ATP = (2S)-2-[5-amino-1-(5-phospho-beta-D-ribosyl)imidazole-4-carboxamido]succinate + ADP + phosphate + 2 H(+). It participates in purine metabolism; IMP biosynthesis via de novo pathway; 5-amino-1-(5-phospho-D-ribosyl)imidazole-4-carboxamide from 5-amino-1-(5-phospho-D-ribosyl)imidazole-4-carboxylate: step 1/2. This is Phosphoribosylaminoimidazole-succinocarboxamide synthase from Nitrosococcus oceani (strain ATCC 19707 / BCRC 17464 / JCM 30415 / NCIMB 11848 / C-107).